A 324-amino-acid polypeptide reads, in one-letter code: CYFIP-related Rac1 interactor B (324 aa).

Gly-2 carries N-myristoyl glycine lipidation. Lys-74 is covalently cross-linked (Glycyl lysine isopeptide (Lys-Gly) (interchain with G-Cter in ubiquitin)).

Belongs to the CYRI family. In terms of assembly, interacts with RAC1 (GTP-bound form preferentially). Post-translationally, ubiquitinated at Lys-74 upon Salmonella bacterial infection. In terms of tissue distribution, expressed in pancreatic ducts (at protein level).

Its subcellular location is the membrane. It is found in the mitochondrion. In terms of biological role, negatively regulates RAC1 signaling and RAC1-driven cytoskeletal remodeling. Regulates chemotaxis, cell migration and epithelial polarization by controlling the polarity, plasticity, duration and extent of protrusions. Limits Rac1 mediated activation of the Scar/WAVE complex, focuses protrusion signals and regulates pseudopod complexity by inhibiting Scar/WAVE-induced actin polymerization. Protects against Salmonella bacterial infection. Attenuates processes such as macropinocytosis, phagocytosis and cell migration and restrict sopE-mediated bacterial entry. Also restricts infection mediated by Mycobacterium tuberculosis and Listeria monocytogenes. Involved in the regulation of mitochondrial dynamics and oxidative stress. This is CYFIP-related Rac1 interactor B (Cyrib) from Mus musculus (Mouse).